Consider the following 211-residue polypeptide: 3-demethoxyubiquinol 3-hydroxylase (211 aa).

The interval 22 to 43 (KHPLNPNRKSPSANTVDGQLSD) is disordered. Positions 28–42 (NRKSPSANTVDGQLS) are enriched in polar residues. Residues Glu60, Glu90, His93, Glu142, Glu174, and His177 each contribute to the Fe cation site.

This sequence belongs to the COQ7 family. Fe cation is required as a cofactor.

The protein localises to the cell membrane. The catalysed reaction is a 5-methoxy-2-methyl-3-(all-trans-polyprenyl)benzene-1,4-diol + AH2 + O2 = a 3-demethylubiquinol + A + H2O. The protein operates within cofactor biosynthesis; ubiquinone biosynthesis. In terms of biological role, catalyzes the hydroxylation of 2-nonaprenyl-3-methyl-6-methoxy-1,4-benzoquinol during ubiquinone biosynthesis. This Francisella philomiragia subsp. philomiragia (strain ATCC 25017 / CCUG 19701 / FSC 153 / O#319-036) protein is 3-demethoxyubiquinol 3-hydroxylase.